The following is a 278-amino-acid chain: Small ribosomal subunit protein uS2 (278 aa).

The segment at 235–278 (QRRKDHGEGGQQAAGGGRGQRDEINVYQGGRGGRGGGPRQQQAS) is disordered. 2 stretches are compositionally biased toward gly residues: residues 243-252 (GGQQAAGGGR) and 263-272 (GGRGGRGGGP).

It belongs to the universal ribosomal protein uS2 family.

The polypeptide is Small ribosomal subunit protein uS2 (Sorangium cellulosum (strain So ce56) (Polyangium cellulosum (strain So ce56))).